The chain runs to 607 residues: Dopamine receptor 3 (607 aa).

Residues 1-23 (MLAGQHHVTDIESPLMVVLWRVA) lie on the Extracellular side of the membrane. The helical transmembrane segment at 24-44 (AGVFLPLVPTMAVFGNVLVIM) threads the bilayer. Residues 45-58 (SVFRERSLQTVTNM) are Cytoplasmic-facing. A helical transmembrane segment spans residues 59–79 (LIVSLAVSDFMVAIGVMSFGV). Residues 80–96 (YYEWNDFKWGLGSFFCH) are Extracellular-facing. A disulfide bridge links C95 with C173. Residues 97-117 (VYQALDVACSTASILNLLAIS) form a helical membrane-spanning segment. Over 118–141 (LDRYIAIGHPISYAQYGARGGRAM) the chain is Cytoplasmic. Residues 142–162 (ISITIVWGVSVAVALPLLLGV) traverse the membrane as a helical segment. Over 163 to 182 (NPMEENDLQECELANPYFNM) the chain is Extracellular. A helical membrane pass occupies residues 183 to 203 (ISSIFSFFIPCIAMIILYTII). Residues 204-523 (FRRLRQRERA…TKQMRREHKA (320 aa)) lie on the Cytoplasmic side of the membrane. A disordered region spans residues 402 to 435 (VPSIQDEKKLSQKSNDLPFSHQNGTHKQKLLPNP). Positions 413-424 (QKSNDLPFSHQN) are enriched in polar residues. Residues 524 to 544 (TVTLAVVLAVFLFCWLPFFVL) form a helical membrane-spanning segment. Residues 545-558 (HLSNSICLIIDENS) lie on the Extracellular side of the membrane. A helical membrane pass occupies residues 559–579 (ACVGFLPLYLATWLGYLNSSL). At 580-607 (NPLIYTVFDQRFRNAFRNILSCGIFKKR) the chain is on the cytoplasmic side.

Belongs to the G-protein coupled receptor 1 family. In terms of tissue distribution, expressed in the neurons of the head, ventral cord and tail with weak expression observed in body wall muscles and PVD neurons. In the ventral cord, expressed strongly in GABAergic neurons with weaker expression in cholinergic motor neurons. Expressed in cholinergic SIA neurons and octopaminergic RIC neurons. In males, expressed in the dorsal and ventral spicule protractor and retractor muscles, and the sensory post-cloacal sensilla B (PCB) neuron. Expressed in the head acetylcholine neurons. Expressed in the AVA, AVB, AVD and AVE command interneurons. Expressed in premotor interneurons.

It localises to the cell membrane. In terms of biological role, G-protein coupled receptor which binds to the neurotransmitter dopamine with high affinity leading to the activation of an associated G-protein and downstream signaling pathways. Couples to G-proteins to inhibit adenylate cyclase (AC) activity and cAMP production. Antagonizes the D1-like dopamine receptor dop-1 to negatively regulate the rate of locomotion. Negatively regulates locomotion through the activation of goa-1 subunit proteins which inactivates the unc-77/nca-1 and nca-2 ion-channels in the command interneurons. Inhibits early-stage swimming by modulating the unc-77/nca-1 and nca-2 ion channels of premotor interneurons. In GABAergic, RIC, and SIA neurons, antagonizes the function of dop-1 to play a role in behavioral plasticity and regulate the decision-making process when conflicting alternatives are present. Antagonizes octopamine signaling in response to food by promoting the dopamine-mediated suppression of crh-1/CREB1 transcription factor activation in cholinergic SIA neurons. This is most likely in association with the G(o)-alpha G-protein subunit goa-1. Promotes male mating behavior by antagonizing acetylcholine signaling to control the protrusion of copulatory spicules from the tail of males during hermaphrodite vulval location. Under mitochondria stress, plays a role in bacterial preference, resulting in learned avoidance behavior. This is Dopamine receptor 3 from Caenorhabditis elegans.